The sequence spans 521 residues: GMP synthase [glutamine-hydrolyzing] (521 aa).

Residues 8-203 (KILILDFGAQ…VVDICGCQTL (196 aa)) enclose the Glutamine amidotransferase type-1 domain. Catalysis depends on Cys85, which acts as the Nucleophile. Residues His177 and Glu179 contribute to the active site. The 193-residue stretch at 204-396 (WTAANIIDDQ…LGLPRTMVYR (193 aa)) folds into the GMPS ATP-PPase domain. 231–237 (SGGVDSS) contacts ATP.

Homodimer.

It catalyses the reaction XMP + L-glutamine + ATP + H2O = GMP + L-glutamate + AMP + diphosphate + 2 H(+). It participates in purine metabolism; GMP biosynthesis; GMP from XMP (L-Gln route): step 1/1. Catalyzes the synthesis of GMP from XMP. This Xanthomonas oryzae pv. oryzae (strain PXO99A) protein is GMP synthase [glutamine-hydrolyzing].